The chain runs to 286 residues: Aldo-keto reductase MAP_4149 (286 aa).

The Proton donor role is filled by tyrosine 61. Positions 201, 203, 239, 241, 242, 247, and 251 each coordinate NADPH.

It belongs to the aldo/keto reductase family.

This is Aldo-keto reductase MAP_4149 from Mycolicibacterium paratuberculosis (strain ATCC BAA-968 / K-10) (Mycobacterium paratuberculosis).